The following is a 147-amino-acid chain: Proteinase inhibitor type-2 T (147 aa).

Positions 1–25 (MAVHKEVSFVAYLLIVLGMFLYVDA) are cleaved as a signal peptide. 2 consecutive repeat copies span residues 25–82 (ALGC…PKNP) and 83–142 (KACP…EPKP). Intrachain disulfides connect cysteine 28/cysteine 116, cysteine 32/cysteine 112, cysteine 40/cysteine 122, cysteine 52/cysteine 89, cysteine 55/cysteine 73, cysteine 56/cysteine 85, cysteine 62/cysteine 98, and cysteine 115/cysteine 133.

This sequence belongs to the protease inhibitor I20 (potato type II proteinase inhibitor) family.

Its function is as follows. Inhibitor of trypsin and chymotrypsin. This Solanum tuberosum (Potato) protein is Proteinase inhibitor type-2 T (PIN2T).